A 473-amino-acid polypeptide reads, in one-letter code: 3-isopropylmalate dehydratase large subunit (473 aa).

[4Fe-4S] cluster-binding residues include Cys351, Cys414, and Cys417.

The protein belongs to the aconitase/IPM isomerase family. LeuC type 1 subfamily. Heterodimer of LeuC and LeuD. Requires [4Fe-4S] cluster as cofactor.

It catalyses the reaction (2R,3S)-3-isopropylmalate = (2S)-2-isopropylmalate. It functions in the pathway amino-acid biosynthesis; L-leucine biosynthesis; L-leucine from 3-methyl-2-oxobutanoate: step 2/4. In terms of biological role, catalyzes the isomerization between 2-isopropylmalate and 3-isopropylmalate, via the formation of 2-isopropylmaleate. This chain is 3-isopropylmalate dehydratase large subunit, found in Acidovorax sp. (strain JS42).